We begin with the raw amino-acid sequence, 717 residues long: Fatty acid oxidation complex subunit alpha (717 aa).

Positions 1–190 are enoyl-CoA hydratase/isomerase; the sequence is MIHAGNAITV…KDGAVDAVVA (190 aa). Substrate is bound at residue Asp-298. The tract at residues 313-717 is 3-hydroxyacyl-CoA dehydrogenase; it reads HPVNQAAVLG…MAANNKKFYG (405 aa). NAD(+) is bound by residues Met-326, Asp-345, 402–404, Lys-409, and Ser-431; that span reads VTE. His-452 (for 3-hydroxyacyl-CoA dehydrogenase activity) is an active-site residue. An NAD(+)-binding site is contributed by Asn-455. Asn-502 is a binding site for substrate.

In the N-terminal section; belongs to the enoyl-CoA hydratase/isomerase family. This sequence in the C-terminal section; belongs to the 3-hydroxyacyl-CoA dehydrogenase family. In terms of assembly, heterotetramer of two alpha chains (FadB) and two beta chains (FadA).

It carries out the reaction a (3S)-3-hydroxyacyl-CoA + NAD(+) = a 3-oxoacyl-CoA + NADH + H(+). The catalysed reaction is a (3S)-3-hydroxyacyl-CoA = a (2E)-enoyl-CoA + H2O. It catalyses the reaction a 4-saturated-(3S)-3-hydroxyacyl-CoA = a (3E)-enoyl-CoA + H2O. The enzyme catalyses (3S)-3-hydroxybutanoyl-CoA = (3R)-3-hydroxybutanoyl-CoA. It carries out the reaction a (3Z)-enoyl-CoA = a 4-saturated (2E)-enoyl-CoA. The catalysed reaction is a (3E)-enoyl-CoA = a 4-saturated (2E)-enoyl-CoA. It participates in lipid metabolism; fatty acid beta-oxidation. In terms of biological role, involved in the aerobic and anaerobic degradation of long-chain fatty acids via beta-oxidation cycle. Catalyzes the formation of 3-oxoacyl-CoA from enoyl-CoA via L-3-hydroxyacyl-CoA. It can also use D-3-hydroxyacyl-CoA and cis-3-enoyl-CoA as substrate. This chain is Fatty acid oxidation complex subunit alpha, found in Acinetobacter baumannii (strain SDF).